We begin with the raw amino-acid sequence, 228 residues long: L-ribulose-5-phosphate 4-epimerase UlaF (228 aa).

Substrate contacts are provided by residues 26-27 (GN), 43-44 (SG), and 72-73 (SS). Residues D74, H93, and H95 each coordinate Zn(2+). D118 acts as the Proton donor/acceptor in catalysis. Position 167 (H167) interacts with Zn(2+). The Proton donor/acceptor role is filled by Y225.

This sequence belongs to the aldolase class II family. AraD/FucA subfamily. Zn(2+) is required as a cofactor.

The enzyme catalyses L-ribulose 5-phosphate = D-xylulose 5-phosphate. The protein operates within cofactor degradation; L-ascorbate degradation; D-xylulose 5-phosphate from L-ascorbate: step 4/4. Its function is as follows. Catalyzes the isomerization of L-ribulose 5-phosphate to D-xylulose 5-phosphate. Is involved in the anaerobic L-ascorbate utilization. The sequence is that of L-ribulose-5-phosphate 4-epimerase UlaF from Salmonella choleraesuis (strain SC-B67).